Reading from the N-terminus, the 400-residue chain is Putative cytochrome P450 133B2 (400 aa).

Cysteine 348 lines the heme pocket.

It belongs to the cytochrome P450 family. Heme serves as cofactor.

The protein is Putative cytochrome P450 133B2 (cyp133B2) of Xylella fastidiosa (strain 9a5c).